The following is a 102-amino-acid chain: Small ribosomal subunit protein uS10 (102 aa).

Belongs to the universal ribosomal protein uS10 family. As to quaternary structure, part of the 30S ribosomal subunit.

Functionally, involved in the binding of tRNA to the ribosomes. The protein is Small ribosomal subunit protein uS10 of Streptococcus thermophilus (strain ATCC BAA-250 / LMG 18311).